We begin with the raw amino-acid sequence, 452 residues long: Cell division protein FtsZ (452 aa).

Residues 24–28 (GAGSN), 111–113 (GTG), Glu142, Arg146, and Asp190 contribute to the GTP site.

This sequence belongs to the FtsZ family. As to quaternary structure, homodimer. Polymerizes to form a dynamic ring structure in a strictly GTP-dependent manner. Interacts directly with several other division proteins.

The protein resides in the cytoplasm. Functionally, essential cell division protein that forms a contractile ring structure (Z ring) at the future cell division site. The regulation of the ring assembly controls the timing and the location of cell division. One of the functions of the FtsZ ring is to recruit other cell division proteins to the septum to produce a new cell wall between the dividing cells. Binds GTP and shows GTPase activity. The polypeptide is Cell division protein FtsZ (Rickettsia felis (strain ATCC VR-1525 / URRWXCal2) (Rickettsia azadi)).